Here is a 251-residue protein sequence, read N- to C-terminus: Small ribosomal subunit protein uS2 (251 aa).

The protein belongs to the universal ribosomal protein uS2 family.

The sequence is that of Small ribosomal subunit protein uS2 from Novosphingobium aromaticivorans (strain ATCC 700278 / DSM 12444 / CCUG 56034 / CIP 105152 / NBRC 16084 / F199).